Consider the following 78-residue polypeptide: Large ribosomal subunit protein bL28 (78 aa).

Residues 1–21 (MSRVCQVTGKKPMVGNNRSHA) are disordered.

This sequence belongs to the bacterial ribosomal protein bL28 family.

The chain is Large ribosomal subunit protein bL28 from Shewanella woodyi (strain ATCC 51908 / MS32).